Consider the following 395-residue polypeptide: Cystathionine beta-lyase MetC (395 aa).

Residue Lys-210 is modified to N6-(pyridoxal phosphate)lysine.

It belongs to the trans-sulfuration enzymes family. As to quaternary structure, homotetramer; dimer of dimers. Requires pyridoxal 5'-phosphate as cofactor.

Its subcellular location is the cytoplasm. It catalyses the reaction L,L-cystathionine + H2O = L-homocysteine + pyruvate + NH4(+). The catalysed reaction is L-cysteine + H2O = hydrogen sulfide + pyruvate + NH4(+) + H(+). The enzyme catalyses an S-substituted L-cysteine + H2O = a thiol + pyruvate + NH4(+). It functions in the pathway amino-acid biosynthesis; L-methionine biosynthesis via de novo pathway; L-homocysteine from L-cystathionine: step 1/1. Its activity is regulated as follows. L-cysteine inhibits cystathionine beta-lyase activity competitively. Inhibited by aminoethoxyvinylglycine (AVG). In terms of biological role, primarily catalyzes the cleavage of cystathionine to homocysteine, pyruvate and ammonia during methionine biosynthesis. Also exhibits cysteine desulfhydrase activity, producing sulfide from cysteine. In addition, under certain growth conditions, exhibits significant alanine racemase coactivity. This is Cystathionine beta-lyase MetC from Escherichia coli (strain K12).